The chain runs to 199 residues: ATP-dependent Clp protease proteolytic subunit (199 aa).

Catalysis depends on serine 103, which acts as the Nucleophile. The active site involves histidine 128.

The protein belongs to the peptidase S14 family. In terms of assembly, fourteen ClpP subunits assemble into 2 heptameric rings which stack back to back to give a disk-like structure with a central cavity, resembling the structure of eukaryotic proteasomes.

It is found in the cytoplasm. It catalyses the reaction Hydrolysis of proteins to small peptides in the presence of ATP and magnesium. alpha-casein is the usual test substrate. In the absence of ATP, only oligopeptides shorter than five residues are hydrolyzed (such as succinyl-Leu-Tyr-|-NHMec, and Leu-Tyr-Leu-|-Tyr-Trp, in which cleavage of the -Tyr-|-Leu- and -Tyr-|-Trp bonds also occurs).. Its function is as follows. Cleaves peptides in various proteins in a process that requires ATP hydrolysis. Has a chymotrypsin-like activity. Plays a major role in the degradation of misfolded proteins. The polypeptide is ATP-dependent Clp protease proteolytic subunit (Photobacterium profundum (strain SS9)).